A 140-amino-acid polypeptide reads, in one-letter code: 3-hydroxyacyl-[acyl-carrier-protein] dehydratase FabZ (140 aa).

Residue His-47 is part of the active site.

It belongs to the thioester dehydratase family. FabZ subfamily.

It is found in the cytoplasm. The catalysed reaction is a (3R)-hydroxyacyl-[ACP] = a (2E)-enoyl-[ACP] + H2O. Functionally, involved in unsaturated fatty acids biosynthesis. Catalyzes the dehydration of short chain beta-hydroxyacyl-ACPs and long chain saturated and unsaturated beta-hydroxyacyl-ACPs. The polypeptide is 3-hydroxyacyl-[acyl-carrier-protein] dehydratase FabZ (Streptococcus gordonii (strain Challis / ATCC 35105 / BCRC 15272 / CH1 / DL1 / V288)).